We begin with the raw amino-acid sequence, 293 residues long: ADP-forming sulfoacetate-CoA ligase subunit SauD (293 aa).

CoA contacts are provided by residues T17 to E20, K43, and I96 to D98. Catalysis depends on H251, which acts as the Tele-phosphohistidine intermediate.

This sequence belongs to the succinate/malate CoA ligase alpha subunit family. In terms of assembly, forms a complex with SauC.

The enzyme catalyses sulfoacetate + ATP + CoA = sulfoacetyl-CoA + ADP + phosphate. In terms of biological role, involved in the degradation of sulfoacetate. Catalyzes the CoA- and ATP-dependent conversion of sulfoacetate to sulfoacetyl-CoA and ADP. Cannot use other sulfonic and carboxylic acids, and shows only residual activity with 3-sulfopropanoate and malonic acid. This is ADP-forming sulfoacetate-CoA ligase subunit SauD from Bilophila wadsworthia (strain 3_1_6).